The following is a 364-amino-acid chain: Histidinol-phosphate aminotransferase (364 aa).

Position 226 is an N6-(pyridoxal phosphate)lysine (K226).

It belongs to the class-II pyridoxal-phosphate-dependent aminotransferase family. Histidinol-phosphate aminotransferase subfamily. As to quaternary structure, homodimer. It depends on pyridoxal 5'-phosphate as a cofactor.

The catalysed reaction is L-histidinol phosphate + 2-oxoglutarate = 3-(imidazol-4-yl)-2-oxopropyl phosphate + L-glutamate. It participates in amino-acid biosynthesis; L-histidine biosynthesis; L-histidine from 5-phospho-alpha-D-ribose 1-diphosphate: step 7/9. The chain is Histidinol-phosphate aminotransferase from Campylobacter jejuni (strain RM1221).